The following is a 275-amino-acid chain: Ribosomal RNA small subunit methyltransferase A (275 aa).

6 residues coordinate S-adenosyl-L-methionine: Asn20, Leu22, Gly47, Glu68, Asp90, and Asn110.

The protein belongs to the class I-like SAM-binding methyltransferase superfamily. rRNA adenine N(6)-methyltransferase family. RsmA subfamily.

It localises to the cytoplasm. It catalyses the reaction adenosine(1518)/adenosine(1519) in 16S rRNA + 4 S-adenosyl-L-methionine = N(6)-dimethyladenosine(1518)/N(6)-dimethyladenosine(1519) in 16S rRNA + 4 S-adenosyl-L-homocysteine + 4 H(+). Its function is as follows. Specifically dimethylates two adjacent adenosines (A1518 and A1519) in the loop of a conserved hairpin near the 3'-end of 16S rRNA in the 30S particle. May play a critical role in biogenesis of 30S subunits. This is Ribosomal RNA small subunit methyltransferase A from Chlorobaculum tepidum (strain ATCC 49652 / DSM 12025 / NBRC 103806 / TLS) (Chlorobium tepidum).